The primary structure comprises 231 residues: MQSKILIIEDDHAITHLLDVALTLDYYNVTTADNATQAHFKIQIDKPDVILLDLGLPDKDGLCLISEIRQHTDIPIIVISARQEEQTIIQALDNGANDYMTKPFNVDELRARIRVIERIAKSHQETNIVFTNGLLSIDFGSKSVVINNQEVHLTPNEFSLLELLSNHKGKVLTYEMILKRIYGYVNKTEMPSLRVHMTSLRQKLSQCHEDAKDIIKTHPRIGYQMLQWKEK.

The 114-residue stretch at Lys4 to Glu117 folds into the Response regulatory domain. A 4-aspartylphosphate modification is found at Asp53. A DNA-binding region (ompR/PhoB-type) is located at residues Asn127 to Gln227.

In terms of processing, phosphorylated by KdpD. Phosphorylation is required for transcriptional activity.

Member of the two-component regulatory system KdpD/KdpE that regulates the transcription of a series of virulence factors through sensing external K(+) concentrations. Also regulates capsular polysaccharide synthesis. Upon phosphorylation by KpdD, functions as a transcriptional regulator by direct binding to promoter regions of target genes including spa, hla, aur and geh. Represses the transcription of kdpFABC operon. This chain is Transcriptional regulatory protein KdpE, found in Staphylococcus aureus (strain NCTC 8325 / PS 47).